A 160-amino-acid polypeptide reads, in one-letter code: Archaemetzincin (160 aa).

H117 contacts Zn(2+). Residue E118 is the Proton acceptor of the active site. Zn(2+) is bound by residues H121, H127, C128, C132, C151, and C154.

This sequence belongs to the peptidase M54 family. Monomer. Zn(2+) is required as a cofactor.

Probable zinc metalloprotease whose natural substrate is unknown. In Archaeoglobus fulgidus (strain ATCC 49558 / DSM 4304 / JCM 9628 / NBRC 100126 / VC-16), this protein is Archaemetzincin.